We begin with the raw amino-acid sequence, 132 residues long: Salivary cystatin-L2 (132 aa).

Residues 1 to 18 form the signal peptide; the sequence is MTSSLALVLVFGGAAVCA. One can recognise a Cystatin domain in the interval 28–117; that stretch reads ERSNQDDPEY…RTCTTVIYRN (90 aa). A required for interaction with mouse ANXA2 region spans residues 87-131; it reads TCELTSTYNKDTCQANANAAQRTCTTVIYRNLQGEKSISSFECAA. Intrachain disulfides connect cysteine 88–cysteine 99 and cysteine 110–cysteine 129.

This sequence belongs to the cystatin family. In terms of assembly, monomer. Interacts (via loop 2) with mouse ANXA2; the interaction results in reduced activation of mouse NLRC4 inflammasome formation upon Anaplasma phagocytophilum infection. In terms of tissue distribution, detected in salivary gland and midgut.

The protein resides in the secreted. Functionally, contributes to the suppression of the host's immune response to tick salivary proteins and is important for successful feeding on hosts. Inhibitor of cysteine proteinases. Inhibits host immune responses, probably via its inhibition of host cathepsins. Inhibits host papain (in vitro). Inhibits host cathepsin L (CTSL) (in vitro). Inhibits host cathepsin L2 (CTSV) (in vitro). Attenuates IFN-beta (IFNB1)-triggered JAK/STAT signaling pathway in mouse dendritic cells. Suppresses induction of interferon-stimulated gene IRF7 and production of CXCL10 in lipopolysaccharide (LPS)-activated dendritic cells. In terms of biological role, (Microbial infection) Down-regulates TLR2-mediated host responses to infection by Borrelia burgdorferi and the production of chemokines CCL3 and CXCL10 by host dendritic cells. Enhances infection by the tick-transmitted pathogen B.burgdorferi (in vitro). (Microbial infection) Inhibits host inflammatory responses to Anaplasma phagocytophilum infection. Interacts with mouse ANXA2 and suppresses oligomerization of NLRC4, a key component of host inflammasomes that sense A.phagocytophilum infection. Indirectly targets caspase-1 (CASP1) activation and subsequent IL-1beta (IL1B) and IL18 release by inhibiting reactive oxygen species (ROS) production from NADPH oxidase complex in A.phagocytophilum-infected mouse macrophages. Its function is as follows. (Microbial infection) Promotes replication of tick-borne encephalitis virus in mouse dendritic cells and reduces anti-viral effect of host IFN-beta (IFNB1). This is Salivary cystatin-L2 from Ixodes scapularis (Black-legged tick).